Here is a 276-residue protein sequence, read N- to C-terminus: Glutamate racemase (276 aa).

Substrate contacts are provided by residues 10-11 (DS) and 42-43 (YG). The Proton donor/acceptor role is filled by Cys-74. 75–76 (NT) lines the substrate pocket. Catalysis depends on Cys-185, which acts as the Proton donor/acceptor. Residue 186 to 187 (TH) participates in substrate binding.

This sequence belongs to the aspartate/glutamate racemases family.

The enzyme catalyses L-glutamate = D-glutamate. Its pathway is cell wall biogenesis; peptidoglycan biosynthesis. Provides the (R)-glutamate required for cell wall biosynthesis. This Levilactobacillus brevis (strain ATCC 367 / BCRC 12310 / CIP 105137 / JCM 1170 / LMG 11437 / NCIMB 947 / NCTC 947) (Lactobacillus brevis) protein is Glutamate racemase.